Here is a 199-residue protein sequence, read N- to C-terminus: N-(5'-phosphoribosyl)anthranilate isomerase (199 aa).

Belongs to the TrpF family.

The enzyme catalyses N-(5-phospho-beta-D-ribosyl)anthranilate = 1-(2-carboxyphenylamino)-1-deoxy-D-ribulose 5-phosphate. The protein operates within amino-acid biosynthesis; L-tryptophan biosynthesis; L-tryptophan from chorismate: step 3/5. In Streptococcus pneumoniae (strain Taiwan19F-14), this protein is N-(5'-phosphoribosyl)anthranilate isomerase.